Here is a 435-residue protein sequence, read N- to C-terminus: Methylenetetrahydrofolate--tRNA-(uracil-5-)-methyltransferase TrmFO (435 aa).

An FAD-binding site is contributed by 9-14 (GAGLAG).

This sequence belongs to the MnmG family. TrmFO subfamily. FAD is required as a cofactor.

The protein localises to the cytoplasm. It carries out the reaction uridine(54) in tRNA + (6R)-5,10-methylene-5,6,7,8-tetrahydrofolate + NADH + H(+) = 5-methyluridine(54) in tRNA + (6S)-5,6,7,8-tetrahydrofolate + NAD(+). It catalyses the reaction uridine(54) in tRNA + (6R)-5,10-methylene-5,6,7,8-tetrahydrofolate + NADPH + H(+) = 5-methyluridine(54) in tRNA + (6S)-5,6,7,8-tetrahydrofolate + NADP(+). Functionally, catalyzes the folate-dependent formation of 5-methyl-uridine at position 54 (M-5-U54) in all tRNAs. In Staphylococcus aureus (strain Newman), this protein is Methylenetetrahydrofolate--tRNA-(uracil-5-)-methyltransferase TrmFO.